An 833-amino-acid polypeptide reads, in one-letter code: DNA ligase (833 aa).

NAD(+) contacts are provided by residues 35–39, 84–85, and Glu-115; these read DADYD and SL. Lys-117 acts as the N6-AMP-lysine intermediate in catalysis. Residues Arg-138, Glu-175, Lys-292, and Lys-316 each coordinate NAD(+). 4 residues coordinate Zn(2+): Cys-410, Cys-413, Cys-428, and Cys-434. The 84-residue stretch at 750–833 folds into the BRCT domain; it reads EKTGPLDGQT…AFLGDHGQQP (84 aa).

It belongs to the NAD-dependent DNA ligase family. LigA subfamily. It depends on Mg(2+) as a cofactor. Mn(2+) serves as cofactor.

The enzyme catalyses NAD(+) + (deoxyribonucleotide)n-3'-hydroxyl + 5'-phospho-(deoxyribonucleotide)m = (deoxyribonucleotide)n+m + AMP + beta-nicotinamide D-nucleotide.. Functionally, DNA ligase that catalyzes the formation of phosphodiester linkages between 5'-phosphoryl and 3'-hydroxyl groups in double-stranded DNA using NAD as a coenzyme and as the energy source for the reaction. It is essential for DNA replication and repair of damaged DNA. The polypeptide is DNA ligase (Xanthomonas axonopodis pv. citri (strain 306)).